The primary structure comprises 590 residues: Nuclear receptor subfamily 2 group C member 1 (590 aa).

The tract at residues 1–166 is required for interaction with KAT2B; that stretch reads MATIEEIAHQ…RLQRCIAFGM (166 aa). The segment at residues 98-173 is a DNA-binding region (nuclear receptor); the sequence is FDLCVVCGDK…FGMKQDSVQC (76 aa). 2 NR C4-type zinc fingers span residues 101 to 121 and 137 to 156; these read CVVC…CEGC and CRGS…CQYC. A phosphoserine mark is found at Ser185 and Ser203. Thr208 is subject to Phosphothreonine. Position 210 is a phosphothreonine; by MAPK1 (Thr210). Lys238 participates in a covalent cross-link: Glycyl lysine isopeptide (Lys-Gly) (interchain with G-Cter in SUMO); alternate. A Glycyl lysine isopeptide (Lys-Gly) (interchain with G-Cter in SUMO2); alternate cross-link involves residue Lys238. Residues 333–577 enclose the NR LBD domain; the sequence is EGMEGSPHLI…SVIPHILKME (245 aa). Phosphoserine; by PKC is present on residues Ser461 and Ser568. The interval 571 to 590 is required for interaction with NRIP1; that stretch reads PHILKMEPADYNSQIIGHSL. Lys575 participates in a covalent cross-link: Glycyl lysine isopeptide (Lys-Gly) (interchain with G-Cter in SUMO2).

The protein belongs to the nuclear hormone receptor family. NR2 subfamily. Homodimer. Heterodimer; with NR2C2 which is required for chromatin remodeling and for binding to promoter regions such as globin DR1 repeats. Interacts with ESR1; the interaction prevents homodimerization of ESR1 and suppresses its transcriptional activity and cell growth. Interacts with NRIP1 (via its LXXLL motifs); the interaction provides corepressor activity. Interacts with HDAC3 (via the DNA-binding domain); the interaction recruits phosphorylated NR2C1 to PML bodies for sumoylation. Interacts with HDAC4 (via the DNA-binding domain). Interacts with PIAS1; the interaction is required for sumoylation of NR2C1. Interacts with UBE2I; the interaction is required for sumoylation of NR2C1. Interacts with KAT2B; the interaction acts as a corepressor of gene expression. In terms of processing, sumoylation requires both PIAS1 and UBE2I. Sumoylation appears to dissociate NR2C1 from the PML nuclear bodies. Enhances the interaction with NRIP1 but inhibits interaction with KAT2B. In proliferating cells, stimulation by all-trans retinoic acid, activation of MAPK1-mediated phosphorylation and recruitment to PML bodies with subsequent sumoylation, suppresses OCT4 expression. Phosphorylated on several serine and threonine residues. Phosphorylation on Thr-210, stimulated by all-trans retinoic acid (atRA) mediates PML location and sumoylation in proliferating cells which then modulates its association with effector molecules, KAT2B and NRIP1. Phosphorylation on Ser-568 by PKC is important for protein stability and function as activator of RARB. As to expression, isoform 1 is highly expressed in the adlumenal compartment of the seminiferous tubule of adult testes (at protein level) and in the eyes of newborn animals. Weakly expressed in other adult organs including the seminal vesicle, prostate, ovary, adrenal gland, heart, thymus, placenta and brain. Expressed during embryonic stages in developing eyes, brain and cartilage primordia (at protein level). Also expressed in the developing spinal motor neurons and in the sympathetic-, parasympathetic- and sensory ganglia of the embryonic PNS. Expressed in the developing neural epithelia of the inner ear, nasal cavity, tongue and retina. At day 16.5, expressed in various tissues including kidney and intestine. In contrast, isoform 2 is widely expressed at a low level throughout the adult testis.

The protein resides in the nucleus. It localises to the PML body. Functionally, orphan nuclear receptor. Binds the IR7 element in the promoter of its own gene in an autoregulatory negative feedback mechanism. Primarily repressor of a broad range of genes including ESR1 and RARB. Together with NR2C2, forms the core of the DRED (direct repeat erythroid-definitive) complex that represses embryonic and fetal globin transcription. Binds to hormone response elements (HREs) consisting of two 5'-AGGTCA-3' half site direct repeat consensus sequences. Also activator of OCT4 gene expression. Plays a fundamental role in early embryogenesis and regulates embryonic stem cell proliferation and differentiation. Mediator of retinoic acid-regulated preadipocyte proliferation. The chain is Nuclear receptor subfamily 2 group C member 1 from Mus musculus (Mouse).